The primary structure comprises 632 residues: 1-deoxy-D-xylulose-5-phosphate synthase (632 aa).

Thiamine diphosphate-binding positions include His77 and 118 to 120; that span reads GHA. Asp149 is a binding site for Mg(2+). Thiamine diphosphate contacts are provided by residues 150–151, Asn178, Phe287, and Glu372; that span reads GS. Asn178 provides a ligand contact to Mg(2+).

The protein belongs to the transketolase family. DXPS subfamily. In terms of assembly, homodimer. The cofactor is Mg(2+). Thiamine diphosphate serves as cofactor.

The catalysed reaction is D-glyceraldehyde 3-phosphate + pyruvate + H(+) = 1-deoxy-D-xylulose 5-phosphate + CO2. Its pathway is metabolic intermediate biosynthesis; 1-deoxy-D-xylulose 5-phosphate biosynthesis; 1-deoxy-D-xylulose 5-phosphate from D-glyceraldehyde 3-phosphate and pyruvate: step 1/1. In terms of biological role, catalyzes the acyloin condensation reaction between C atoms 2 and 3 of pyruvate and glyceraldehyde 3-phosphate to yield 1-deoxy-D-xylulose-5-phosphate (DXP). This Chlorobium luteolum (strain DSM 273 / BCRC 81028 / 2530) (Pelodictyon luteolum) protein is 1-deoxy-D-xylulose-5-phosphate synthase.